The following is a 117-amino-acid chain: Large ribosomal subunit protein bL20 (117 aa).

Belongs to the bacterial ribosomal protein bL20 family.

Binds directly to 23S ribosomal RNA and is necessary for the in vitro assembly process of the 50S ribosomal subunit. It is not involved in the protein synthesizing functions of that subunit. The sequence is that of Large ribosomal subunit protein bL20 from Oleidesulfovibrio alaskensis (strain ATCC BAA-1058 / DSM 17464 / G20) (Desulfovibrio alaskensis).